We begin with the raw amino-acid sequence, 352 residues long: MRVDLFDFDLPDENIALRPANPRDQARFLIVRPDGSLMLEDRRVFELPSFLRAGDALVFNDTKVIPAQLEGVRIREGAERTPVSCTLHMRVAANRWKAFARPGKRIKQGDVIDFDGLSANVAEKGEAGEIDLEFAASGPDLDRAIAGVGHIPLPPYIAAKRPEDSQDRTDYQTIYAREEGAVAAPTAGLHFTPALFEALDKAGIERHFVTLHVGAGTFLPVKADDTDDHKMHQEIGHVSAETAEALNAVKARGGRIVSVGTTSLRLLESAASEDGRLLPWSDATGIFITPGYRFKAVDVLMTNFHLPKSTLFMLVSAFAGLETMRAAYAHAIETGYRFYSYGDSSLLFRKDK.

It belongs to the QueA family. As to quaternary structure, monomer.

It is found in the cytoplasm. The catalysed reaction is 7-aminomethyl-7-carbaguanosine(34) in tRNA + S-adenosyl-L-methionine = epoxyqueuosine(34) in tRNA + adenine + L-methionine + 2 H(+). The protein operates within tRNA modification; tRNA-queuosine biosynthesis. Its function is as follows. Transfers and isomerizes the ribose moiety from AdoMet to the 7-aminomethyl group of 7-deazaguanine (preQ1-tRNA) to give epoxyqueuosine (oQ-tRNA). The chain is S-adenosylmethionine:tRNA ribosyltransferase-isomerase from Allorhizobium ampelinum (strain ATCC BAA-846 / DSM 112012 / S4) (Agrobacterium vitis (strain S4)).